Consider the following 251-residue polypeptide: DNA repair protein RecO (251 aa).

This sequence belongs to the RecO family.

Functionally, involved in DNA repair and RecF pathway recombination. This is DNA repair protein RecO from Staphylococcus saprophyticus subsp. saprophyticus (strain ATCC 15305 / DSM 20229 / NCIMB 8711 / NCTC 7292 / S-41).